Here is a 125-residue protein sequence, read N- to C-terminus: Ribonuclease P protein component (125 aa).

It belongs to the RnpA family. Consists of a catalytic RNA component (M1 or rnpB) and a protein subunit.

The enzyme catalyses Endonucleolytic cleavage of RNA, removing 5'-extranucleotides from tRNA precursor.. Functionally, RNaseP catalyzes the removal of the 5'-leader sequence from pre-tRNA to produce the mature 5'-terminus. It can also cleave other RNA substrates such as 4.5S RNA. The protein component plays an auxiliary but essential role in vivo by binding to the 5'-leader sequence and broadening the substrate specificity of the ribozyme. In Rhodococcus opacus (strain B4), this protein is Ribonuclease P protein component.